Consider the following 83-residue polypeptide: Protein WFDC9 (83 aa).

The N-terminal stretch at 1-24 is a signal peptide; the sequence is MKPWIIVLTVSAHGILVFLHVLGS.

It is found in the secreted. This is Protein WFDC9 (Wfdc9) from Mus musculus (Mouse).